The sequence spans 889 residues: Potassium/sodium hyperpolarization-activated cyclic nucleotide-gated channel 2 (889 aa).

The span at 1-10 (MDARGGGGRP) shows a compositional bias: gly residues. Positions 1–159 (MDARGGGGRP…GPAGEPRGSQ (159 aa)) are disordered. Residues 1–215 (MDARGGGGRP…PYSDFRFYWD (215 aa)) lie on the Cytoplasmic side of the membrane. Positions 17–55 (TPAPGPPPPPPPAPPQQQPPPPPPPAPPPGPGPAPPQHP) are enriched in pro residues. A compositionally biased stretch (low complexity) spans 129 to 155 (GAASGPAPGPGPAEEAGSEEAGPAGEP). Phosphoserine occurs at positions 146 and 161. The involved in subunit assembly stretch occupies residues 158–209 (SQASFMQRQFGALLQPGVNKFSLRMFGSQKAVEREQERVKSAGAWIIHPYSD). Residues 216–236 (FTMLLFMVGNLIIIPVGITFF) traverse the membrane as a helical segment. Topologically, residues 237 to 240 (KDET) are extracellular. Residues 241–261 (TAPWIVFNVVSDTFFLMDLVL) traverse the membrane as a helical segment. At 262–288 (NFRTGIVIEDNTEIILDPEKIKKKYLR) the chain is on the cytoplasmic side. The helical transmembrane segment at 289–309 (TWFVVDFVSSIPVDYIFLIVE) threads the bilayer. The Extracellular segment spans residues 310–317 (KGIDSEVY). The chain crosses the membrane as a helical; Voltage-sensor span at residues 318-338 (KTARALRIVRFTKILSLLRLL). Residues 339–369 (RLSRLIRYIHQWEEIFHMTYDLASAVMRICN) lie on the Cytoplasmic side of the membrane. A helical transmembrane segment spans residues 370-390 (LISMMLLLCHWDGCLQFLVPM). At 391-413 (LQDFPRNCWVSINGMVNHSWSEL) the chain is on the extracellular side. Asn407 is a glycosylation site (N-linked (GlcNAc...) asparagine). Positions 414–435 (YSFALFKAMSHMLCIGYGRQAP) form an intramembrane region, pore-forming. Residues 436–440 (ESMTD) are Extracellular-facing. Residues 441–461 (IWLTMLSMIVGATCYAMFIGH) form a helical membrane-spanning segment. The Cytoplasmic portion of the chain corresponds to 462–889 (ATALIQSLDS…SARSRLSSNL (428 aa)). Met599, Gly608, Glu609, Ile610, Cys611, Arg618, Thr619, and Arg659 together coordinate 3',5'-cyclic AMP. The residue at position 668 (Ser668) is a Phosphoserine; by PKG/PRKG2. Ser754 carries the post-translational modification Phosphoserine. Residues 754-889 (SPRLVRRPPP…SARSRLSSNL (136 aa)) form a disordered region. Omega-N-methylarginine is present on Arg756. Residues 760–784 (RPPPGPAPAAASPGPPPPASPPGAP) are compositionally biased toward pro residues. Ser771, Ser779, Ser786, Ser866, and Ser868 each carry phosphoserine. The segment covering 785–860 (ASPRAPRTSP…TPAARAAAPS (76 aa)) has biased composition (low complexity).

It belongs to the potassium channel HCN family. In terms of assembly, homotetramer. The channel is composed of a homo- or heterotetrameric complex of pore-forming subunits. Heterotetramer with HCN1. Forms an obligate 4:4 complex with accessory subunit PEX5L. Interacts with KCNE2. Post-translationally, phosphorylation at Ser-668 by PRKG2 shifts the voltage-dependence to more negative voltages, hence counteracting the stimulatory effect of cGMP on gating. In terms of processing, S-palmitoylated. N-glycosylated; required for cell surface trafficking of HCN2. Highly expressed throughout the brain. Detected at low levels in heart.

It is found in the cell membrane. The enzyme catalyses Na(+)(in) = Na(+)(out). The catalysed reaction is K(+)(in) = K(+)(out). It catalyses the reaction NH4(+)(in) = NH4(+)(out). With respect to regulation, activated by cAMP, and at 10-100 times higher concentrations, also by cGMP. cAMP binding causes a conformation change that leads to the assembly of an active tetramer and channel opening. Binding of cAMP removes a tonic inhibition conferred by cyclic nucleotide-binding domain (CNBD) on channel opening. Channel activity is modulated by intracellular chloride ions and pH; acidic pH shifts the activation to more negative voltages. Inhibited by extracellular cesium ions. Functionally, hyperpolarization-activated ion channel that is permeable to sodium and potassium ions. Displays lower selectivity for K(+) over Na(+) ions. Contributes to the native pacemaker currents in heart (If) and in neurons (Ih). Can also transport ammonium in the distal nephron. Involved in the initiation of neuropathic pain in sensory neurons. The polypeptide is Potassium/sodium hyperpolarization-activated cyclic nucleotide-gated channel 2 (Homo sapiens (Human)).